We begin with the raw amino-acid sequence, 76 residues long: Small ribosomal subunit protein bS16 (76 aa).

This sequence belongs to the bacterial ribosomal protein bS16 family.

This Helicobacter pylori (strain P12) protein is Small ribosomal subunit protein bS16.